We begin with the raw amino-acid sequence, 197 residues long: Nucleoid occlusion factor SlmA (197 aa).

The HTH tetR-type domain maps to 7–67 (INRREHILQC…GLIDFIEESL (61 aa)). The segment at residues 30–49 (TTAKLAAEVGVSEAALYRHF) is a DNA-binding region (H-T-H motif).

The protein belongs to the nucleoid occlusion factor SlmA family. Homodimer. Interacts with FtsZ.

Its subcellular location is the cytoplasm. It localises to the nucleoid. Its function is as follows. Required for nucleoid occlusion (NO) phenomenon, which prevents Z-ring formation and cell division over the nucleoid. Acts as a DNA-associated cell division inhibitor that binds simultaneously chromosomal DNA and FtsZ, and disrupts the assembly of FtsZ polymers. SlmA-DNA-binding sequences (SBS) are dispersed on non-Ter regions of the chromosome, preventing FtsZ polymerization at these regions. This is Nucleoid occlusion factor SlmA from Shewanella sediminis (strain HAW-EB3).